A 153-amino-acid polypeptide reads, in one-letter code: Phosphatase NudJ (153 aa).

Positions K3–Q131 constitute a Nudix hydrolase domain. The Nudix box motif lies at G36–G57.

It belongs to the Nudix hydrolase family. NudJ subfamily. As to quaternary structure, monomer. Mg(2+) is required as a cofactor.

The protein is Phosphatase NudJ (nudJ) of Escherichia coli O139:H28 (strain E24377A / ETEC).